The chain runs to 134 residues: Cytochrome b (134 aa).

Helical transmembrane passes span 33–53 (FGSL…FLAM), 77–98 (WLIR…FLHV), and 113–133 (WNIG…GYVL). Residues histidine 83 and histidine 97 each coordinate heme b.

It belongs to the cytochrome b family. As to quaternary structure, the cytochrome bc1 complex contains 11 subunits: 3 respiratory subunits (MT-CYB, CYC1 and UQCRFS1), 2 core proteins (UQCRC1 and UQCRC2) and 6 low-molecular weight proteins (UQCRH/QCR6, UQCRB/QCR7, UQCRQ/QCR8, UQCR10/QCR9, UQCR11/QCR10 and a cleavage product of UQCRFS1). This cytochrome bc1 complex then forms a dimer. It depends on heme b as a cofactor.

Its subcellular location is the mitochondrion inner membrane. Its function is as follows. Component of the ubiquinol-cytochrome c reductase complex (complex III or cytochrome b-c1 complex) that is part of the mitochondrial respiratory chain. The b-c1 complex mediates electron transfer from ubiquinol to cytochrome c. Contributes to the generation of a proton gradient across the mitochondrial membrane that is then used for ATP synthesis. The protein is Cytochrome b (MT-CYB) of Sorex shinto sadonis (Sado shrew).